A 570-amino-acid chain; its full sequence is Grayanic acid biosynthesis cluster cytochrome P450 monooxygenase (570 aa).

The chain crosses the membrane as a helical span at residues 9-29 (ILTIFWLPIAAAXLYGAGLAI). N191 is a glycosylation site (N-linked (GlcNAc...) asparagine). C510 contacts heme.

The protein belongs to the cytochrome P450 family. It depends on heme as a cofactor.

It localises to the membrane. It functions in the pathway secondary metabolite biosynthesis. In terms of biological role, non-reducing polyketide synthase; part of the gene cluster that mediates the biosynthesis of orcinol depsidone grayanic acid (GRA), the only major secondary metabolite known in C.grayi. The first step consists in the ring and depside synthesis by PKS16 leading to 4-O-demethylsphaerophorin, involving different orcinol-like rings, one with acetyl CoA and the other with octanoyl CoA as the starter. Further depsidone formation by the GRA cluster-specific cytochrome P450 leads to 4-O-demethylgrayanic acid. Finally, the cluster specific O-methyltransferase probably converts the 4-O-demethylgrayanic acid into grayanic acid. In Cladonia grayi (Gray's cup lichen), this protein is Grayanic acid biosynthesis cluster cytochrome P450 monooxygenase.